The chain runs to 285 residues: Eukaryotic translation initiation factor 3 subunit F-2 (285 aa).

Positions 11–145 constitute an MPN domain; sequence VLIKPLVLFQ…TRLYCAVEIG (135 aa).

It belongs to the eIF-3 subunit F family. Component of the eukaryotic translation initiation factor 3 (eIF-3) complex. The eIF-3 complex interacts with pix.

The protein localises to the cytoplasm. Component of the eukaryotic translation initiation factor 3 (eIF-3) complex, which is involved in protein synthesis of a specialized repertoire of mRNAs and, together with other initiation factors, stimulates binding of mRNA and methionyl-tRNAi to the 40S ribosome. The eIF-3 complex specifically targets and initiates translation of a subset of mRNAs involved in cell proliferation. This is Eukaryotic translation initiation factor 3 subunit F-2 from Drosophila erecta (Fruit fly).